We begin with the raw amino-acid sequence, 218 residues long: Small ribosomal subunit protein uS3 (218 aa).

Residues 43 to 113 (IREHIERKLA…KVQVNVREVS (71 aa)) form the KH type-2 domain.

The protein belongs to the universal ribosomal protein uS3 family. In terms of assembly, part of the 30S ribosomal subunit. Forms a tight complex with proteins S10 and S14.

Its function is as follows. Binds the lower part of the 30S subunit head. Binds mRNA in the 70S ribosome, positioning it for translation. This chain is Small ribosomal subunit protein uS3, found in Rubrobacter xylanophilus (strain DSM 9941 / JCM 11954 / NBRC 16129 / PRD-1).